Reading from the N-terminus, the 468-residue chain is Tyrosine-protein phosphatase YopH (468 aa).

The tract at residues 127-194 (ARGHVSSHSH…TVSPYGPEAR (68 aa)) is disordered. Residues 130-141 (HVSSHSHSALHA) are compositionally biased toward low complexity. The 310-residue stretch at 152–461 (SHLDPRTPPL…DVLIKLAEGQ (310 aa)) folds into the Tyrosine-protein phosphatase domain. The active-site Phosphocysteine intermediate is the cysteine 403.

It belongs to the protein-tyrosine phosphatase family. Non-receptor class subfamily.

The protein localises to the secreted. The catalysed reaction is O-phospho-L-tyrosyl-[protein] + H2O = L-tyrosyl-[protein] + phosphate. In terms of biological role, essential virulence determinant. This protein is a protein tyrosine phosphatase. The essential function of YopH in Yersinia pathogenesis is host-protein dephosphorylation. It contributes to the ability of the bacteria to resist phagocytosis by peritoneal macrophages. The sequence is that of Tyrosine-protein phosphatase YopH (yopH) from Yersinia pseudotuberculosis serotype I (strain IP32953).